Consider the following 450-residue polypeptide: Growth/differentiation factor 7 (450 aa).

The first 19 residues, 1–19 (MDLSAAAALCLWLLSACRP), serve as a signal peptide directing secretion. Positions 20–321 (RDGLEAAAVL…AVIGGRRRRR (302 aa)) are excised as a propeptide. Residue Asn83 is glycosylated (N-linked (GlcNAc...) asparagine). Positions 296 to 349 (ASEPLPDPGTGTASPRAVIGGRRRRRTALAGTRTAQGSGGGAGRGHGRRGRSRC) are disordered. The segment covering 340-349 (GHGRRGRSRC) has biased composition (basic residues). Intrachain disulfides connect Cys349/Cys415, Cys378/Cys447, and Cys382/Cys449.

It belongs to the TGF-beta family. In terms of assembly, homodimer; disulfide-linked.

It localises to the secreted. In terms of biological role, may play an active role in the motor area of the primate neocortex. The chain is Growth/differentiation factor 7 (GDF7) from Homo sapiens (Human).